The chain runs to 460 residues: MSTKMTPPVEKNEFIDVVFEDLTHDGAGVAKVKGYPIFVKNGLPGEEAQIKIIKVKKNFAFGRLMKLHTESPYRKDAECPVYNQCGGCQLQHLTYEGQLQAKEKQVRDVMQRIGGLSDVPVHPVLGMKNPWVYRNKAQVPIGEREGGLVAGFYRQGTHDIINMESCLIQAEENDTLIQEVKRICEKHGISAYNEERNKGTLRHVMARYGQVTGEIMLVFITRTAELPNKKAIIEEIATKFPEVKSIVQNVNPKRTNVIFGDKTTVLYGSEYIYDFIGDIKFAISARSFYQVNPEQTKVLYDKTLEYAKLDGNETVIDAYCGIGSISLFLAQKAKKVYGVEIVPEAIEDAKRNAALNNMTNAEFGVGEAEVVIPKWYKEGVIADTMVVDPPRKGCDEALLNTIIDMKPKRVVYVSCNPATLARDLKVLEEGGYKTQEVQPVDMFPHTTHVECVVLMSRVEK.

Residues 8-66 enclose the TRAM domain; that stretch reads PVEKNEFIDVVFEDLTHDGAGVAKVKGYPIFVKNGLPGEEAQIKIIKVKKNFAFGRLMK. [4Fe-4S] cluster contacts are provided by Cys79, Cys85, Cys88, and Cys166. S-adenosyl-L-methionine contacts are provided by Gln290, Tyr319, Glu340, and Asp388. Residue Cys415 is the Nucleophile of the active site.

Belongs to the class I-like SAM-binding methyltransferase superfamily. RNA M5U methyltransferase family.

This is an uncharacterized protein from Bacillus cereus (strain ATCC 10987 / NRS 248).